The primary structure comprises 225 residues: N-(5'-phosphoribosyl)anthranilate isomerase (225 aa).

Belongs to the TrpF family.

It catalyses the reaction N-(5-phospho-beta-D-ribosyl)anthranilate = 1-(2-carboxyphenylamino)-1-deoxy-D-ribulose 5-phosphate. The protein operates within amino-acid biosynthesis; L-tryptophan biosynthesis; L-tryptophan from chorismate: step 3/5. This is N-(5'-phosphoribosyl)anthranilate isomerase from Nitrobacter hamburgensis (strain DSM 10229 / NCIMB 13809 / X14).